The following is a 118-amino-acid chain: Beta-2-microglobulin (118 aa).

Positions 1-20 are cleaved as a signal peptide; it reads MARVVALVLLGLLSLTGLEA. One can recognise an Ig-like C1-type domain in the interval 25-111; the sequence is PKVQVYSRHP…QHSTLKEPLI (87 aa). An intrachain disulfide couples Cys-45 to Cys-99.

Belongs to the beta-2-microglobulin family. As to quaternary structure, heterodimer of an alpha chain and a beta chain. Beta-2-microglobulin is the beta-chain of major histocompatibility complex class I molecules.

Its subcellular location is the secreted. In terms of biological role, component of the class I major histocompatibility complex (MHC). Involved in the presentation of peptide antigens to the immune system. The sequence is that of Beta-2-microglobulin (B2M) from Equus asinus (Donkey).